Consider the following 407-residue polypeptide: Proteasome-activating nucleotidase (407 aa).

Residues 22 to 67 are a coiled coil; sequence KEKAYLAELESKVLRLELKNKDITRENVQIKKENEILKRELDKLRI. ATP is bound by residues 192–197 and H331; that span reads GTGKTL. Positions 405–407 are docks into pockets in the proteasome alpha-ring to cause gate opening; the sequence is MYG.

This sequence belongs to the AAA ATPase family. Homohexamer. The hexameric complex has a two-ring architecture resembling a top hat that caps the 20S proteasome core at one or both ends. Upon ATP-binding, the C-terminus of PAN interacts with the alpha-rings of the proteasome core by binding to the intersubunit pockets.

Its subcellular location is the cytoplasm. Its function is as follows. ATPase which is responsible for recognizing, binding, unfolding and translocation of substrate proteins into the archaeal 20S proteasome core particle. Is essential for opening the gate of the 20S proteasome via an interaction with its C-terminus, thereby allowing substrate entry and access to the site of proteolysis. Thus, the C-termini of the proteasomal ATPase function like a 'key in a lock' to induce gate opening and therefore regulate proteolysis. Unfolding activity requires energy from ATP hydrolysis, whereas ATP binding alone promotes ATPase-20S proteasome association which triggers gate opening, and supports translocation of unfolded substrates. The chain is Proteasome-activating nucleotidase from Methanococcus vannielii (strain ATCC 35089 / DSM 1224 / JCM 13029 / OCM 148 / SB).